Consider the following 47-residue polypeptide: Laccase-2d (47 aa).

The Plastocyanin-like domain maps to 2–47 (TGPVADLHIINKDLSPDGFQRPTVVAGGGRDVVSIGRAGDNVTIRF).

The protein belongs to the multicopper oxidase family. In terms of assembly, homodimer. Cu cation serves as cofactor. Post-translationally, N-glycosylated; contains 17% carbohydrates.

It localises to the secreted. It catalyses the reaction 4 hydroquinone + O2 = 4 benzosemiquinone + 2 H2O. Inhibited by sodium azide, SDS and mercaptoethanol, but not by 4-hexyl resocinol, L-cysteine and dithiothreitol. Activity is inhibited by the heavy metal ions Cr, W, Sn, Ag(+) and Hg(2+), but not by Pb(2+), Fe(3+), Ni(2+), Li(2+), Co(2+) or Cd(2+). Lignin degradation and detoxification of lignin-derived products. Has highest activity towards ABTS, also active towards ferulic acid and guaiacol, but is not active towards tyrosine, vanillic acid, 2,5-dimethyl aniline, p-anisidine or violuric acid. This is Laccase-2d from Cerrena unicolor (Canker rot fungus).